The following is a 152-amino-acid chain: Transcriptional repressor NrdR (152 aa).

The segment at 3 to 34 (CPYCNASDTKVIDSRLAAEGAQVRRRRSCNSC) is a zinc-finger region. An ATP-cone domain is found at 49–139 (PRIIKSSGKI…VYRDFQDIDA (91 aa)).

This sequence belongs to the NrdR family. Requires Zn(2+) as cofactor.

In terms of biological role, negatively regulates transcription of bacterial ribonucleotide reductase nrd genes and operons by binding to NrdR-boxes. The protein is Transcriptional repressor NrdR of Psychrobacter arcticus (strain DSM 17307 / VKM B-2377 / 273-4).